We begin with the raw amino-acid sequence, 309 residues long: Probable cell wall protein PGA50 (309 aa).

The first 17 residues, 1 to 17, serve as a signal peptide directing secretion; sequence MKLNLLLLLFIVELVAA. N-linked (GlcNAc...) asparagine glycosylation is found at Asn67, Asn115, Asn248, Asn267, and Asn277. Positions 241–281 are disordered; it reads STTTFSSNGTSSGTTNGDTRAETKSSNSTQTSSSDKNSSQI. Ser286 carries GPI-anchor amidated serine lipidation. Positions 287–309 are cleaved as a propeptide — removed in mature form; sequence TGVANFVASFGMGTLLLFVLSLC.

It belongs to the IHD1 family. The GPI-anchor is attached to the protein in the endoplasmic reticulum and serves to target the protein to the cell surface. There, the glucosamine-inositol phospholipid moiety is cleaved off and the GPI-modified mannoprotein is covalently attached via its lipidless GPI glycan remnant to the 1,6-beta-glucan of the outer cell wall layer.

It is found in the secreted. It localises to the cell wall. The protein localises to the membrane. Functionally, probable GPI-anchored cell wall protein that may be involved in cell wall organization, hyphal growth, as well as in virulence. The protein is Probable cell wall protein PGA50 (PGA50) of Candida albicans (strain SC5314 / ATCC MYA-2876) (Yeast).